The chain runs to 279 residues: Release factor glutamine methyltransferase (279 aa).

Residues E141 and N187 each coordinate S-adenosyl-L-methionine. Residue 187 to 190 coordinates substrate; sequence NPPY.

Belongs to the protein N5-glutamine methyltransferase family. PrmC subfamily.

It carries out the reaction L-glutaminyl-[peptide chain release factor] + S-adenosyl-L-methionine = N(5)-methyl-L-glutaminyl-[peptide chain release factor] + S-adenosyl-L-homocysteine + H(+). In terms of biological role, methylates the class 1 translation termination release factors RF1/PrfA and RF2/PrfB on the glutamine residue of the universally conserved GGQ motif. This chain is Release factor glutamine methyltransferase, found in Corynebacterium glutamicum (strain ATCC 13032 / DSM 20300 / JCM 1318 / BCRC 11384 / CCUG 27702 / LMG 3730 / NBRC 12168 / NCIMB 10025 / NRRL B-2784 / 534).